The chain runs to 331 residues: tRNA uridine(34) hydroxylase (331 aa).

One can recognise a Rhodanese domain in the interval 123–217 (TDPEVLLIDT…YLEDVPQEES (95 aa)). Residue C177 is the Cysteine persulfide intermediate of the active site. A disordered region spans residues 293–331 (KSRGEEHIGSEAAKAIKKRQAEKKLKRKNYHQHLTQGAE). Positions 307 to 323 (AIKKRQAEKKLKRKNYH) are enriched in basic residues.

It belongs to the TrhO family.

It carries out the reaction uridine(34) in tRNA + AH2 + O2 = 5-hydroxyuridine(34) in tRNA + A + H2O. Catalyzes oxygen-dependent 5-hydroxyuridine (ho5U) modification at position 34 in tRNAs. The chain is tRNA uridine(34) hydroxylase from Hahella chejuensis (strain KCTC 2396).